A 305-amino-acid polypeptide reads, in one-letter code: UDP-3-O-acyl-N-acetylglucosamine deacetylase (305 aa).

Zn(2+) is bound by residues His-79, His-238, and Asp-242. His-265 serves as the catalytic Proton donor.

This sequence belongs to the LpxC family. The cofactor is Zn(2+).

It carries out the reaction a UDP-3-O-[(3R)-3-hydroxyacyl]-N-acetyl-alpha-D-glucosamine + H2O = a UDP-3-O-[(3R)-3-hydroxyacyl]-alpha-D-glucosamine + acetate. It functions in the pathway glycolipid biosynthesis; lipid IV(A) biosynthesis; lipid IV(A) from (3R)-3-hydroxytetradecanoyl-[acyl-carrier-protein] and UDP-N-acetyl-alpha-D-glucosamine: step 2/6. Its function is as follows. Catalyzes the hydrolysis of UDP-3-O-myristoyl-N-acetylglucosamine to form UDP-3-O-myristoylglucosamine and acetate, the committed step in lipid A biosynthesis. The polypeptide is UDP-3-O-acyl-N-acetylglucosamine deacetylase (Shigella boydii serotype 4 (strain Sb227)).